The following is a 199-amino-acid chain: Recombination protein RecR (199 aa).

The segment at 57–72 (CEICGNMDTKNICHIC) adopts a C4-type zinc-finger fold. Positions 80-175 (STIAIVETVA…KISRLASGIP (96 aa)) constitute a Toprim domain.

This sequence belongs to the RecR family.

Its function is as follows. May play a role in DNA repair. It seems to be involved in an RecBC-independent recombinational process of DNA repair. It may act with RecF and RecO. The protein is Recombination protein RecR of Rickettsia typhi (strain ATCC VR-144 / Wilmington).